The following is a 152-amino-acid chain: Ribosomal RNA large subunit methyltransferase H (152 aa).

Residues leucine 65, glycine 96, and 115-120 each bind S-adenosyl-L-methionine; that span reads LGPMTW.

Belongs to the RNA methyltransferase RlmH family. In terms of assembly, homodimer.

It is found in the cytoplasm. The enzyme catalyses pseudouridine(1915) in 23S rRNA + S-adenosyl-L-methionine = N(3)-methylpseudouridine(1915) in 23S rRNA + S-adenosyl-L-homocysteine + H(+). Specifically methylates the pseudouridine at position 1915 (m3Psi1915) in 23S rRNA. The chain is Ribosomal RNA large subunit methyltransferase H from Gluconacetobacter diazotrophicus (strain ATCC 49037 / DSM 5601 / CCUG 37298 / CIP 103539 / LMG 7603 / PAl5).